A 229-amino-acid chain; its full sequence is Large ribosomal subunit protein uL1 (229 aa).

This sequence belongs to the universal ribosomal protein uL1 family. Part of the 50S ribosomal subunit.

In terms of biological role, binds directly to 23S rRNA. The L1 stalk is quite mobile in the ribosome, and is involved in E site tRNA release. Protein L1 is also a translational repressor protein, it controls the translation of the L11 operon by binding to its mRNA. The polypeptide is Large ribosomal subunit protein uL1 (Streptococcus pneumoniae (strain Taiwan19F-14)).